We begin with the raw amino-acid sequence, 662 residues long: PsbB mRNA maturation factor Mbb1, chloroplastic (662 aa).

The N-terminal 50 residues, 1–50 (MSLVPFSQLWRGVRTRGPVEQASSSSSSSSSSRRTWYAPARSQTGVQVAA), are a transit peptide targeting the chloroplast. 2 disordered regions span residues 14-38 (RTRG…TWYA) and 75-101 (IIAD…RDEA). Over residues 23–32 (SSSSSSSSSS) the composition is skewed to low complexity. Residues 88 to 101 (EGERGDATGSRDEA) show a composition bias toward basic and acidic residues. TPR repeat units follow at residues 126 to 160 (SRIR…DPAD), 161 to 194 (PRAY…TGNV), 196 to 229 (PYIW…DGTH), 231 to 263 (CAWH…CRRK), 269 to 302 (AYLY…AEGA), 305 to 338 (VALW…NPRS), 339 to 372 (RYVH…NPTD), 373 to 406 (PALY…DPSD), 408 to 440 (YMWQ…DPRS), and 444 to 477 (VYVF…DPKS). 2 disordered regions span residues 540–563 (SDGN…EAAA) and 598–662 (LPDF…RSMG).

Part of a 300 kDa complex that associates with RNA.

The protein localises to the plastid. Its subcellular location is the chloroplast stroma. Involved, directly or indirectly, in the processing of the chloroplast encoded psbB mRNA to its mature form, acting via the 5'-UTR of the psbB mRNA. This Chlamydomonas reinhardtii (Chlamydomonas smithii) protein is PsbB mRNA maturation factor Mbb1, chloroplastic (MBB1).